A 315-amino-acid chain; its full sequence is Tyrosine recombinase XerC (315 aa).

Residues 13–104 (ADLAAAREEW…GVRSLLRHLE (92 aa)) enclose the Core-binding (CB) domain. The Tyr recombinase domain maps to 125–309 (SLPKPLTADD…DTQRLLEVYD (185 aa)). Catalysis depends on residues R168, K193, H261, R264, and H287. Y296 serves as the catalytic O-(3'-phospho-DNA)-tyrosine intermediate.

It belongs to the 'phage' integrase family. XerC subfamily. In terms of assembly, forms a cyclic heterotetrameric complex composed of two molecules of XerC and two molecules of XerD.

The protein localises to the cytoplasm. In terms of biological role, site-specific tyrosine recombinase, which acts by catalyzing the cutting and rejoining of the recombining DNA molecules. The XerC-XerD complex is essential to convert dimers of the bacterial chromosome into monomers to permit their segregation at cell division. It also contributes to the segregational stability of plasmids. This chain is Tyrosine recombinase XerC, found in Brucella suis biovar 1 (strain 1330).